A 439-amino-acid chain; its full sequence is ATP-dependent RNA helicase RhlB (439 aa).

The Q motif signature appears at Gln-9–Ala-37. The region spanning Leu-40–Val-219 is the Helicase ATP-binding domain. Residue Ala-53–Thr-60 coordinates ATP. Positions Asp-165–Asp-168 match the DEAD box motif. In terms of domain architecture, Helicase C-terminal spans Lys-243–Leu-390. Positions Pro-395–Pro-439 are disordered. The span at Ser-425 to Pro-439 shows a compositional bias: basic residues.

This sequence belongs to the DEAD box helicase family. RhlB subfamily. As to quaternary structure, component of the RNA degradosome, which is a multiprotein complex involved in RNA processing and mRNA degradation.

The protein resides in the cytoplasm. The enzyme catalyses ATP + H2O = ADP + phosphate + H(+). In terms of biological role, DEAD-box RNA helicase involved in RNA degradation. Has RNA-dependent ATPase activity and unwinds double-stranded RNA. The protein is ATP-dependent RNA helicase RhlB of Shewanella sp. (strain ANA-3).